Here is a 148-residue protein sequence, read N- to C-terminus: Ribosome maturation factor RimP (148 aa).

Belongs to the RimP family.

It is found in the cytoplasm. Required for maturation of 30S ribosomal subunits. The sequence is that of Ribosome maturation factor RimP from Treponema denticola (strain ATCC 35405 / DSM 14222 / CIP 103919 / JCM 8153 / KCTC 15104).